A 210-amino-acid polypeptide reads, in one-letter code: Large ribosomal subunit protein uL3 (210 aa).

Residues 119 to 151 (FQGAIKRHGQSRGPMSHGSRYHRRPGSMGPVAP) are disordered.

This sequence belongs to the universal ribosomal protein uL3 family. Part of the 50S ribosomal subunit. Forms a cluster with proteins L14 and L19.

In terms of biological role, one of the primary rRNA binding proteins, it binds directly near the 3'-end of the 23S rRNA, where it nucleates assembly of the 50S subunit. This Bacillus cytotoxicus (strain DSM 22905 / CIP 110041 / 391-98 / NVH 391-98) protein is Large ribosomal subunit protein uL3.